A 105-amino-acid chain; its full sequence is Insulin (105 aa).

An N-terminal signal peptide occupies residues 1 to 24 (MALWTRLVPLLALLALWAPAPAHA). 3 cysteine pairs are disulfide-bonded: C31/C91, C43/C104, and C90/C95. Positions 57–82 (EVEGPQVGALELAGGPGAGGLEGPPQ) are cleaved as a propeptide — c peptide.

It belongs to the insulin family. As to quaternary structure, heterodimer of a B chain and an A chain linked by two disulfide bonds.

The protein resides in the secreted. In terms of biological role, insulin decreases blood glucose concentration. It increases cell permeability to monosaccharides, amino acids and fatty acids. It accelerates glycolysis, the pentose phosphate cycle, and glycogen synthesis in liver. In Ovis aries (Sheep), this protein is Insulin (INS).